A 148-amino-acid chain; its full sequence is Large ribosomal subunit protein bL27m (148 aa).

The transit peptide at 1–30 (MAAAALTLRTRAAVTALLSPTAPTALAVRH) directs the protein to the mitochondrion. Residues 28–48 (VRHASKKTGGSSKNLGGKSRG) are disordered.

The protein belongs to the bacterial ribosomal protein bL27 family. Component of the mitochondrial ribosome large subunit (39S) which comprises a 16S rRNA and about 50 distinct proteins.

The protein resides in the mitochondrion. This Mus musculus (Mouse) protein is Large ribosomal subunit protein bL27m (Mrpl27).